Consider the following 405-residue polypeptide: Divinyl chlorophyllide a 8-vinyl-reductase, chloroplastic (405 aa).

The N-terminal 58 residues, 1-58 (MAALLLSSHLTAASSSSTTSPTARPAPSFVSFRAANAAPKGARRGWPFLASSVEPPPA), are a transit peptide targeting the chloroplast.

The protein resides in the plastid. Its subcellular location is the chloroplast. It carries out the reaction protochlorophyllide a + NADP(+) = 3,8-divinyl protochlorophyllide a + NADPH + H(+). It participates in porphyrin-containing compound metabolism; chlorophyll biosynthesis. In terms of biological role, catalyzes the conversion of divinyl chlorophyllide to monovinyl chlorophyllide. Reduces the 8-vinyl group of the tetrapyrrole to an ethyl group using NADPH as the reductant. Can use (3,8-divinyl)-chlorophyllide a (DV-Chlidea) &gt; (3,8-divinyl)-chlorophyll a (DV-Chla) &gt; (3,8-divinyl)-protochlorophyllide a (DV-Pchlidea) &gt; (3,8-divinyl)-magnesium-protoporphyrin IX monomethyl ester (DV-MPE) &gt; (3,8-divinyl)-magnesium-protoporphyrin IX (DV-Mg-Proto) as substrates. The polypeptide is Divinyl chlorophyllide a 8-vinyl-reductase, chloroplastic (DVR) (Oryza sativa subsp. indica (Rice)).